Reading from the N-terminus, the 715-residue chain is Polyribonucleotide nucleotidyltransferase (715 aa).

Mg(2+) is bound by residues aspartate 493 and aspartate 499. The region spanning 560 to 619 (PRMITVKINPEKIRDVIGKGGSVIRALTEETGTTIDISDDGVVTIASTSSEGMAEAKKRI) is the KH domain. The 69-residue stretch at 629–697 (GQVYEGTVLK…EKGRVRLSAK (69 aa)) folds into the S1 motif domain.

This sequence belongs to the polyribonucleotide nucleotidyltransferase family. Mg(2+) serves as cofactor.

The protein localises to the cytoplasm. The enzyme catalyses RNA(n+1) + phosphate = RNA(n) + a ribonucleoside 5'-diphosphate. Functionally, involved in mRNA degradation. Catalyzes the phosphorolysis of single-stranded polyribonucleotides processively in the 3'- to 5'-direction. The sequence is that of Polyribonucleotide nucleotidyltransferase from Burkholderia cenocepacia (strain HI2424).